Here is a 433-residue protein sequence, read N- to C-terminus: Chaperone SurA (433 aa).

A signal peptide spans methionine 1 to alanine 24. 2 consecutive PpiC domains span residues asparagine 175–aspartate 276 and valine 285–aspartate 384.

Its subcellular location is the periplasm. It catalyses the reaction [protein]-peptidylproline (omega=180) = [protein]-peptidylproline (omega=0). Its function is as follows. Chaperone involved in the correct folding and assembly of outer membrane proteins. Recognizes specific patterns of aromatic residues and the orientation of their side chains, which are found more frequently in integral outer membrane proteins. May act in both early periplasmic and late outer membrane-associated steps of protein maturation. The chain is Chaperone SurA from Colwellia psychrerythraea (strain 34H / ATCC BAA-681) (Vibrio psychroerythus).